The sequence spans 333 residues: Succinylglutamate desuccinylase (333 aa).

Residues His-56, Glu-59, and His-149 each coordinate Zn(2+). Glu-214 is an active-site residue.

Belongs to the AspA/AstE family. Succinylglutamate desuccinylase subfamily. Zn(2+) is required as a cofactor.

It carries out the reaction N-succinyl-L-glutamate + H2O = L-glutamate + succinate. Its pathway is amino-acid degradation; L-arginine degradation via AST pathway; L-glutamate and succinate from L-arginine: step 5/5. Transforms N(2)-succinylglutamate into succinate and glutamate. This is Succinylglutamate desuccinylase from Chromobacterium violaceum (strain ATCC 12472 / DSM 30191 / JCM 1249 / CCUG 213 / NBRC 12614 / NCIMB 9131 / NCTC 9757 / MK).